Reading from the N-terminus, the 147-residue chain is Nucleoside diphosphate kinase (147 aa).

The ATP site is built by Lys11, Phe59, Arg87, Thr93, Arg104, and Asn114. The active-site Pros-phosphohistidine intermediate is His117.

Belongs to the NDK family. The cofactor is Mg(2+).

The protein localises to the cytoplasm. The enzyme catalyses a 2'-deoxyribonucleoside 5'-diphosphate + ATP = a 2'-deoxyribonucleoside 5'-triphosphate + ADP. It carries out the reaction a ribonucleoside 5'-diphosphate + ATP = a ribonucleoside 5'-triphosphate + ADP. Major role in the synthesis of nucleoside triphosphates other than ATP. The ATP gamma phosphate is transferred to the NDP beta phosphate via a ping-pong mechanism, using a phosphorylated active-site intermediate. This is Nucleoside diphosphate kinase from Sulfurisphaera tokodaii (strain DSM 16993 / JCM 10545 / NBRC 100140 / 7) (Sulfolobus tokodaii).